The primary structure comprises 103 residues: Flagellar hook-basal body complex protein FliE (103 aa).

Belongs to the FliE family.

Its subcellular location is the bacterial flagellum basal body. The protein is Flagellar hook-basal body complex protein FliE of Erwinia tasmaniensis (strain DSM 17950 / CFBP 7177 / CIP 109463 / NCPPB 4357 / Et1/99).